A 43-amino-acid polypeptide reads, in one-letter code: Protein PsbN (43 aa).

Residues 4 to 24 (AIVLSISMAAVVVAITGISIY) traverse the membrane as a helical segment.

It belongs to the PsbN family.

The protein resides in the cellular thylakoid membrane. Its function is as follows. May play a role in photosystem I and II biogenesis. This Nostoc punctiforme (strain ATCC 29133 / PCC 73102) protein is Protein PsbN.